The primary structure comprises 708 residues: Ubiquitin thioesterase Zranb1 (708 aa).

The RanBP2-type 1 zinc finger occupies 3–33 (EHGIKWACEYCTYENWPSAIKCTMCRAQRPS). Zn(2+)-binding residues include Cys10, Cys13, Cys24, and Cys27. Residues 38–73 (TEDPFKSGSSDVGRDWDPSSTEGGSSPLICPDSSAR) form a disordered region. RanBP2-type zinc fingers lie at residues 84 to 113 (NANK…QRRT) and 149 to 178 (RTQH…PRPN). The Zn(2+) site is built by Cys90, Cys93, Cys104, Cys107, Cys155, Cys158, Cys169, and Cys172. Residues 202–224 (RWRGGCSSGNSQRRSPPTTKRDS) are disordered. The segment covering 209–219 (SGNSQRRSPPT) has biased composition (polar residues). 2 ANK repeats span residues 260–290 (KKTD…SGGD) and 313–340 (YTLV…QQAA). Residues 432–592 (LYALWNRTAG…RGHFSALVAM (161 aa)) form the OTU domain. The Nucleophile role is filled by Cys443. Residue His585 is the Proton acceptor of the active site.

The protein belongs to the peptidase C64 family. Interacts with TRAF6. Interacts with APC.

It localises to the cytoplasm. The protein localises to the nucleus. It carries out the reaction Thiol-dependent hydrolysis of ester, thioester, amide, peptide and isopeptide bonds formed by the C-terminal Gly of ubiquitin (a 76-residue protein attached to proteins as an intracellular targeting signal).. In terms of biological role, ubiquitin thioesterase, which specifically hydrolyzes 'Lys-29'-linked and 'Lys-33'-linked diubiquitin. Also cleaves 'Lys-63'-linked chains, but with 40-fold less efficiency compared to 'Lys-29'-linked ones. Positive regulator of the Wnt signaling pathway that deubiquitinates APC protein, a negative regulator of Wnt-mediated transcription. Acts as a regulator of autophagy by mediating deubiquitination of PIK3C3/VPS34, thereby promoting autophagosome maturation. Plays a role in the regulation of cell morphology and cytoskeletal organization. Required in the stress fiber dynamics and cell migration. This is Ubiquitin thioesterase Zranb1 from Mus musculus (Mouse).